The primary structure comprises 239 residues: Ribose-5-phosphate isomerase A (239 aa).

Residues 39 to 42, 95 to 98, and 108 to 111 each bind substrate; these read SGST, DGAD, and KGGG. The active-site Proton acceptor is Glu-117. Position 135 (Lys-135) interacts with substrate.

The protein belongs to the ribose 5-phosphate isomerase family. Homodimer.

It carries out the reaction aldehydo-D-ribose 5-phosphate = D-ribulose 5-phosphate. It functions in the pathway carbohydrate degradation; pentose phosphate pathway; D-ribose 5-phosphate from D-ribulose 5-phosphate (non-oxidative stage): step 1/1. Catalyzes the reversible conversion of ribose-5-phosphate to ribulose 5-phosphate. In Chlamydia muridarum (strain MoPn / Nigg), this protein is Ribose-5-phosphate isomerase A.